The sequence spans 619 residues: Chaperone protein DnaK (619 aa).

Position 179 is a phosphothreonine; by autocatalysis (T179). The segment at 584–619 (QAKAQGAAGPQPGAQAQGQPNDGGKEDVVEAEVVDK) is disordered. Over residues 585–605 (AKAQGAAGPQPGAQAQGQPND) the composition is skewed to low complexity. The span at 606-619 (GGKEDVVEAEVVDK) shows a compositional bias: basic and acidic residues.

This sequence belongs to the heat shock protein 70 family.

Its function is as follows. Acts as a chaperone. The polypeptide is Chaperone protein DnaK (Elusimicrobium minutum (strain Pei191)).